The primary structure comprises 233 residues: Ribitol-5-phosphate cytidylyltransferase (233 aa).

Residues 7 to 10 (LAGG) and 80 to 86 (GADRNET) contribute to the CTP site.

Belongs to the IspD/TarI cytidylyltransferase family. TarI subfamily.

The enzyme catalyses D-ribitol 5-phosphate + CTP + H(+) = CDP-L-ribitol + diphosphate. The protein operates within cell wall biogenesis; poly(ribitol phosphate) teichoic acid biosynthesis. Its function is as follows. Catalyzes the transfer of the cytidylyl group of CTP to D-ribitol 5-phosphate. This chain is Ribitol-5-phosphate cytidylyltransferase, found in Lactiplantibacillus plantarum (strain ATCC BAA-793 / NCIMB 8826 / WCFS1) (Lactobacillus plantarum).